A 414-amino-acid chain; its full sequence is Imidazolonepropionase (414 aa).

Residues histidine 73 and histidine 75 each coordinate Fe(3+). Zn(2+) is bound by residues histidine 73 and histidine 75. 3 residues coordinate 4-imidazolone-5-propanoate: arginine 82, tyrosine 145, and histidine 178. An N-formimidoyl-L-glutamate-binding site is contributed by tyrosine 145. Histidine 249 contacts Fe(3+). Histidine 249 is a Zn(2+) binding site. Glutamine 252 is a binding site for 4-imidazolone-5-propanoate. A Fe(3+)-binding site is contributed by aspartate 324. Aspartate 324 is a Zn(2+) binding site. Residues asparagine 326 and glycine 328 each coordinate N-formimidoyl-L-glutamate. Serine 329 lines the 4-imidazolone-5-propanoate pocket.

It belongs to the metallo-dependent hydrolases superfamily. HutI family. Zn(2+) is required as a cofactor. The cofactor is Fe(3+).

The protein localises to the cytoplasm. The enzyme catalyses 4-imidazolone-5-propanoate + H2O = N-formimidoyl-L-glutamate. It participates in amino-acid degradation; L-histidine degradation into L-glutamate; N-formimidoyl-L-glutamate from L-histidine: step 3/3. Its function is as follows. Catalyzes the hydrolytic cleavage of the carbon-nitrogen bond in imidazolone-5-propanoate to yield N-formimidoyl-L-glutamate. It is the third step in the universal histidine degradation pathway. This is Imidazolonepropionase from Shewanella denitrificans (strain OS217 / ATCC BAA-1090 / DSM 15013).